We begin with the raw amino-acid sequence, 379 residues long: Cytochrome b (379 aa).

The next 4 membrane-spanning stretches (helical) occupy residues 33-53, 77-98, 113-133, and 178-198; these read FGSL…FLAM, WLIR…FIHV, WNIG…GYVL, and FFAF…VHLL. Residues histidine 83 and histidine 97 each coordinate heme b. Heme b contacts are provided by histidine 182 and histidine 196. Position 201 (histidine 201) interacts with a ubiquinone. Transmembrane regions (helical) follow at residues 226-246, 288-308, 320-340, and 347-367; these read TKDL…ALFF, LGGV…PLLN, ITQV…WIGG, and XTMI…ILIP.

Belongs to the cytochrome b family. The cytochrome bc1 complex contains 11 subunits: 3 respiratory subunits (MT-CYB, CYC1 and UQCRFS1), 2 core proteins (UQCRC1 and UQCRC2) and 6 low-molecular weight proteins (UQCRH/QCR6, UQCRB/QCR7, UQCRQ/QCR8, UQCR10/QCR9, UQCR11/QCR10 and a cleavage product of UQCRFS1). This cytochrome bc1 complex then forms a dimer. Requires heme b as cofactor.

Its subcellular location is the mitochondrion inner membrane. Functionally, component of the ubiquinol-cytochrome c reductase complex (complex III or cytochrome b-c1 complex) that is part of the mitochondrial respiratory chain. The b-c1 complex mediates electron transfer from ubiquinol to cytochrome c. Contributes to the generation of a proton gradient across the mitochondrial membrane that is then used for ATP synthesis. The polypeptide is Cytochrome b (MT-CYB) (Akodon boliviensis (Bolivian grass mouse)).